The primary structure comprises 164 residues: MTGATALPYRSNVGAALFSRAGKILVARRADLGPDAAYQWQLPQGGIDGDEDPAAAVLRELDEEIGTTAVELLGEIPEWLSYDFPPDVVAKFGARHRGQRQRWFALRFLGTDDMIRLDAHAHPEFDEWRWTELSSIPALAVPFKRPIYERLARDFARFAKTDGA.

The Nudix hydrolase domain occupies 8–153 (PYRSNVGAAL…KRPIYERLAR (146 aa)). The Nudix box signature appears at 45-66 (GGIDGDEDPAAAVLRELDEEIG).

It belongs to the Nudix hydrolase family. RppH subfamily. A divalent metal cation serves as cofactor.

Functionally, accelerates the degradation of transcripts by removing pyrophosphate from the 5'-end of triphosphorylated RNA, leading to a more labile monophosphorylated state that can stimulate subsequent ribonuclease cleavage. This is RNA pyrophosphohydrolase from Acidiphilium cryptum (strain JF-5).